We begin with the raw amino-acid sequence, 205 residues long: MYRIKDEWGEFLVRLARRAIEEYVRNGRTIEPPEGTPPELWEKMGVFVTLNRHNVPPQMSLRGCIGFPLPIYPLVEATIKAAIYAAVDDPRFPPVKESELDDIVIEVSVLTPPELIEGPPEERPRKIKVGRDGLIIEKGIHSGLLLPQVPIEWGWDEEEFLAQTCWKAGLPPDCWLDEDTKVYRFTAEIFEEEYPKGPVKRKPLV.

The AMMECR1 domain maps to 7-201; sequence EWGEFLVRLA…EEYPKGPVKR (195 aa).

In Thermococcus onnurineus (strain NA1), this protein is Protein TON_1965.